The chain runs to 173 residues: dCTP deaminase, dUMP-forming (173 aa).

Residues 93-98, D111, 119-121, Q138, and Y151 contribute to the dCTP site; these read RSSTGR and TLE. The active-site Proton donor/acceptor is the E121.

This sequence belongs to the dCTP deaminase family. As to quaternary structure, homotrimer.

It catalyses the reaction dCTP + 2 H2O = dUMP + NH4(+) + diphosphate. It functions in the pathway pyrimidine metabolism; dUMP biosynthesis; dUMP from dCTP: step 1/1. In terms of biological role, bifunctional enzyme that catalyzes both the deamination of dCTP to dUTP and the hydrolysis of dUTP to dUMP without releasing the toxic dUTP intermediate. The sequence is that of dCTP deaminase, dUMP-forming from Clostridium botulinum (strain Eklund 17B / Type B).